The primary structure comprises 219 residues: Small ribosomal subunit protein uS3 (219 aa).

Positions 41-110 (IRKIINTEYS…DVSINICEVK (70 aa)) constitute a KH type-2 domain.

The protein belongs to the universal ribosomal protein uS3 family. As to quaternary structure, part of the 30S ribosomal subunit. Forms a tight complex with proteins S10 and S14.

In terms of biological role, binds the lower part of the 30S subunit head. Binds mRNA in the 70S ribosome, positioning it for translation. This Orientia tsutsugamushi (strain Ikeda) (Rickettsia tsutsugamushi) protein is Small ribosomal subunit protein uS3.